Consider the following 201-residue polypeptide: Glutathione peroxidase 1 (201 aa).

Serine 32 bears the Phosphoserine mark. Residue selenocysteine 47 is part of the active site. Residue selenocysteine 47 is a non-standard amino acid, selenocysteine. 3 positions are modified to N6-acetyllysine; alternate: lysine 86, lysine 112, and lysine 146. Lysine 86, lysine 112, and lysine 146 each carry N6-succinyllysine; alternate. Serine 195 and serine 199 each carry phosphoserine.

This sequence belongs to the glutathione peroxidase family. Homotetramer. Interacts with MIEN1. In terms of processing, during periods of oxidative stress, Sec-47 may react with a superoxide radical, irreversibly lose hydroselenide and be converted to dehydroalanine.

It is found in the cytoplasm. The enzyme catalyses 2 glutathione + H2O2 = glutathione disulfide + 2 H2O. It catalyses the reaction (12S)-hydroperoxy-(5Z,8Z,10E,14Z)-eicosatetraenoate + 2 glutathione = (12S)-hydroxy-(5Z,8Z,10E,14Z)-eicosatetraenoate + glutathione disulfide + H2O. Protects the hemoglobin in erythrocytes from oxidative breakdown. In platelets, plays a crucial role of glutathione peroxidase in the arachidonic acid metabolism. The chain is Glutathione peroxidase 1 (GPX1) from Hylobates lar (Lar gibbon).